The sequence spans 248 residues: Thioredoxin-like protein AAED1, chloroplastic (248 aa).

The N-terminal 52 residues, 1 to 52, are a transit peptide targeting the chloroplast; the sequence is MAIALSSSSTITSITLQPKLKTIHGLGTVLPGYSVKSHFRSVSLRRSAVVVS. The residue at position 53 (Ala53) is an N-acetylalanine.

This sequence belongs to the peroxiredoxin-like PRXL2 family. PRXL2C subfamily.

It localises to the plastid. It is found in the chloroplast. In Arabidopsis thaliana (Mouse-ear cress), this protein is Thioredoxin-like protein AAED1, chloroplastic.